Here is an 895-residue protein sequence, read N- to C-terminus: WD repeat-containing protein 36 (895 aa).

WD repeat units lie at residues 30 to 63 (VVRF…LVAV), 72 to 101 (CCMA…IVHT), 110 to 143 (HFLQ…LQLT), 152 to 186 (SAIL…LLYT), 193 to 230 (GVTA…MKFR), 237 to 272 (TSIS…INQM), 277 to 320 (STAI…RFRM), and 327 to 361 (TNIR…FNKS). 2 positions are modified to phosphoserine: serine 382 and serine 399. WD repeat units lie at residues 389-428 (TKFA…GAYF), 441-475 (ATAV…HRGS), 486-522 (VRGV…HSVS), 527-562 (PNIM…VREF), 564-605 (GHQG…DCFL), and 607-645 (DSAP…SVVS).

Part of the small subunit (SSU) processome, composed of more than 70 proteins and the RNA chaperone small nucleolar RNA (snoRNA) U3. Expressed in heart, placenta, liver, skeletal muscle, kidney and pancreas. In ocular tissues, strong expression in iris, sclera, ciliary muscle, ciliary body, retina and optic nerve.

Its subcellular location is the nucleus. The protein resides in the nucleolus. Part of the small subunit (SSU) processome, first precursor of the small eukaryotic ribosomal subunit. During the assembly of the SSU processome in the nucleolus, many ribosome biogenesis factors, an RNA chaperone and ribosomal proteins associate with the nascent pre-rRNA and work in concert to generate RNA folding, modifications, rearrangements and cleavage as well as targeted degradation of pre-ribosomal RNA by the RNA exosome. Involved in the nucleolar processing of SSU 18S rRNA. Involved in T-cell activation and highly coregulated with IL2. The chain is WD repeat-containing protein 36 from Homo sapiens (Human).